Consider the following 510-residue polypeptide: Probable DNA ligase (510 aa).

Glu210 serves as a coordination point for ATP. Lys212 functions as the N6-AMP-lysine intermediate in the catalytic mechanism. Residues Arg217, Arg232, Glu261, Phe296, Arg367, and Lys373 each contribute to the ATP site.

Belongs to the ATP-dependent DNA ligase family. Mg(2+) serves as cofactor.

The enzyme catalyses ATP + (deoxyribonucleotide)n-3'-hydroxyl + 5'-phospho-(deoxyribonucleotide)m = (deoxyribonucleotide)n+m + AMP + diphosphate.. Its function is as follows. DNA ligase that seals nicks in double-stranded DNA during DNA replication, DNA recombination and DNA repair. This Saccharopolyspora erythraea (strain ATCC 11635 / DSM 40517 / JCM 4748 / NBRC 13426 / NCIMB 8594 / NRRL 2338) protein is Probable DNA ligase.